A 383-amino-acid polypeptide reads, in one-letter code: Beta-1,3-galactosyltransferase 4 (383 aa).

Residues 1–8 (MPLSLFRR) lie on the Cytoplasmic side of the membrane. Residues 9–29 (LLLAALLLVIIWTLFGPSGIG) form a helical membrane-spanning segment. The Lumenal segment spans residues 30 to 383 (EELLSLSLAS…RCRVIAWLHS (354 aa)). Asn149 is a glycosylation site (N-linked (GlcNAc...) asparagine).

This sequence belongs to the glycosyltransferase 31 family.

It localises to the golgi apparatus membrane. The enzyme catalyses a ganglioside GM2 (d18:1(4E)) + UDP-alpha-D-galactose = a ganglioside GM1 (d18:1(4E)) + UDP + H(+). The catalysed reaction is a ganglioside GM2 + UDP-alpha-D-galactose = a ganglioside GM1 + UDP + H(+). It carries out the reaction a ganglioside GD2 (d18:1(4E)) + UDP-alpha-D-galactose = a ganglioside GD1b (d18:1(4E)) + UDP + H(+). It catalyses the reaction a ganglioside GA2 (d18:1(4E)) + UDP-alpha-D-galactose = a ganglioside GA1 (d18:1(4E)) + UDP + H(+). Its pathway is protein modification; protein glycosylation. Functionally, involved in GM1/GD1B/GA1 ganglioside biosynthesis. In Canis lupus familiaris (Dog), this protein is Beta-1,3-galactosyltransferase 4 (B3GALT4).